Reading from the N-terminus, the 482-residue chain is Argininosuccinate synthase (482 aa).

Residues 17–25 and Ala43 contribute to the ATP site; that span reads AFSGGLDTS. Tyr99 serves as a coordination point for L-citrulline. The ATP site is built by Gly129 and Thr131. L-aspartate is bound by residues Thr131, Asn135, and Asp136. Asn135 provides a ligand contact to L-citrulline. Residue Asp136 coordinates ATP. The L-citrulline site is built by Arg139 and Ser192. Asp194 is an ATP binding site. L-citrulline-binding residues include Thr201, Glu203, and Glu280. The interval 461–482 is disordered; that stretch reads SRGEATDEETMLDRAAMESGTD.

It belongs to the argininosuccinate synthase family. Type 2 subfamily. Homotetramer.

Its subcellular location is the cytoplasm. The enzyme catalyses L-citrulline + L-aspartate + ATP = 2-(N(omega)-L-arginino)succinate + AMP + diphosphate + H(+). Its pathway is amino-acid biosynthesis; L-arginine biosynthesis; L-arginine from L-ornithine and carbamoyl phosphate: step 2/3. The sequence is that of Argininosuccinate synthase (argG) from Streptomyces lavendulae.